The primary structure comprises 300 residues: GTPase Era (300 aa).

Positions 5 to 176 (RSGFVCLIGR…IDVLAAALPP (172 aa)) constitute an Era-type G domain. Residues 13–20 (GRPNTGKS) are G1. 13 to 20 (GRPNTGKS) is a binding site for GTP. Positions 39–43 (QTTRH) are G2. The interval 61 to 64 (DTPG) is G3. GTP-binding positions include 61–65 (DTPGL) and 125–128 (TKID). Residues 125-128 (TKID) form a G4 region. A G5 region spans residues 155–157 (VSA). A KH type-2 domain is found at 207 to 286 (VHDELPHSLA…YLDLHVNVAK (80 aa)).

Belongs to the TRAFAC class TrmE-Era-EngA-EngB-Septin-like GTPase superfamily. Era GTPase family. Monomer.

Its subcellular location is the cell envelope. The protein resides in the secreted. The protein localises to the cell wall. In terms of biological role, exhibits GTPase activity. Binds RNA but is probably not involved in ribosome assembly in mycobacteria. The chain is GTPase Era from Mycobacterium leprae (strain TN).